We begin with the raw amino-acid sequence, 499 residues long: Terpentedienyl-diphosphate synthase (499 aa).

Residues D284 and D286 each contribute to the Mg(2+) site. The short motif at D284 to D287 is the DXDD motif element.

The protein belongs to the terpene synthase family. In terms of assembly, monomer. Mg(2+) serves as cofactor.

The catalysed reaction is (2E,6E,10E)-geranylgeranyl diphosphate = terpentedienyl diphosphate. It participates in antibiotic biosynthesis. In terms of biological role, involved in the production of the isoprenoid antibiotic terpentecin. Converts geranylgeranyl diphosphate (GGDP) into terpentedienol diphosphate (TDP) by a protonation-initiated cyclization. The chain is Terpentedienyl-diphosphate synthase (cyc1) from Kitasatospora griseola (Streptomyces griseolosporeus).